A 322-amino-acid chain; its full sequence is MVPSLALVPGEPAGIGPELCVRLAQRPRPDAHLIAYADPDTLHSAAKSLSLSVRLLDPDQPARAPGDLPLHPVRQAVATRFGAPDPANAAAVIAGLRGAADACLTGRLQGIVTGPVHKAVINAGGIPYTGTTELLADHAGCPVVMMLANSIVRVALVTTHLPLRAVADAITADALQQCLRITHAAMQRDFGLEDPRIAVLGLNPHAGEDGLLGREELDIVIPVIEQLRGDGMHLIGPLPADTAFLPQKLGGFDAVVAMYHDQGLPVLKYSGFEQAVNITLGLPYPRVAVDHGTALELAGRRIADPSSLMAATALCARLAARR.

Threonine 132 provides a ligand contact to substrate. A divalent metal cation-binding residues include histidine 160, histidine 205, and histidine 260. 3 residues coordinate substrate: lysine 268, asparagine 277, and arginine 286.

It belongs to the PdxA family. As to quaternary structure, homodimer. Zn(2+) is required as a cofactor. It depends on Mg(2+) as a cofactor. The cofactor is Co(2+).

It is found in the cytoplasm. The enzyme catalyses 4-(phosphooxy)-L-threonine + NAD(+) = 3-amino-2-oxopropyl phosphate + CO2 + NADH. The protein operates within cofactor biosynthesis; pyridoxine 5'-phosphate biosynthesis; pyridoxine 5'-phosphate from D-erythrose 4-phosphate: step 4/5. Its function is as follows. Catalyzes the NAD(P)-dependent oxidation of 4-(phosphooxy)-L-threonine (HTP) into 2-amino-3-oxo-4-(phosphooxy)butyric acid which spontaneously decarboxylates to form 3-amino-2-oxopropyl phosphate (AHAP). This chain is 4-hydroxythreonine-4-phosphate dehydrogenase, found in Xanthomonas oryzae pv. oryzae (strain PXO99A).